The following is a 346-amino-acid chain: Large ribosomal subunit protein uL3 (346 aa).

Residues 324–346 (RPPKKKPPVERPQITYVSRESKQ) are disordered.

It belongs to the universal ribosomal protein uL3 family. As to quaternary structure, part of the 50S ribosomal subunit. Forms a cluster with proteins L14 and L24e.

Its function is as follows. One of the primary rRNA binding proteins, it binds directly near the 3'-end of the 23S rRNA, where it nucleates assembly of the 50S subunit. The chain is Large ribosomal subunit protein uL3 from Thermococcus kodakarensis (strain ATCC BAA-918 / JCM 12380 / KOD1) (Pyrococcus kodakaraensis (strain KOD1)).